An 89-amino-acid chain; its full sequence is Small ribosomal subunit protein uS17 (89 aa).

Belongs to the universal ribosomal protein uS17 family. In terms of assembly, part of the 30S ribosomal subunit.

One of the primary rRNA binding proteins, it binds specifically to the 5'-end of 16S ribosomal RNA. This Albidiferax ferrireducens (strain ATCC BAA-621 / DSM 15236 / T118) (Rhodoferax ferrireducens) protein is Small ribosomal subunit protein uS17.